We begin with the raw amino-acid sequence, 331 residues long: Laforin (331 aa).

The CBM20 domain occupies 1–124 (MRFRFGVVVP…NNLVDGVYCL (124 aa)). A Phosphoserine; by AMPK modification is found at serine 25. Substrate-binding positions include tryptophan 32, lysine 87, 103-107 (GPHHD), aspartate 197, aspartate 235, and arginine 241. In terms of domain architecture, Tyrosine-protein phosphatase spans 156–323 (HYSRILPNIW…EEDFFQKFGK (168 aa)). Cysteine 266 (phosphocysteine intermediate) is an active-site residue. Positions 266-272 (CNAGVGR) match the Glucan phosphatase signature motif CXAGXGR motif. Residues 267–272 (NAGVGR) and tyrosine 304 contribute to the substrate site.

It belongs to the protein-tyrosine phosphatase family. As to quaternary structure, homodimer. Interacts with itself. Interacts with PPP1R3B, PPP1R3C, PPP1R3D, HIRIP5, and EPM2AIP1. Binds glycogen and Lafora bodies. Interacts with NHLRC1/malin (via the NHL repeats). Forms a complex with NHLRC1/malin and HSP70. Interacts with PPP1R3D; in the presence of NHLC1/malin the interaction leads to ubiquitination and autophagic degradation of PPP1R3D. Interacts (via the phosphatase domain) with MAPT/Tau; the interaction dephosphorylates MAPT. Interacts with PRDM8. Polyubiquitinated by NHLRC1/malin. In terms of processing, phosphorylation on Ser-25 by AMPK affects the phosphatase activity of the enzyme and its ability to homodimerize and interact with NHLRC1, PPP1R3C or PRKAA2.

It is found in the cytoplasm. It localises to the endoplasmic reticulum membrane. Its subcellular location is the cell membrane. The catalysed reaction is O-phospho-L-tyrosyl-[protein] + H2O = L-tyrosyl-[protein] + phosphate. The enzyme catalyses O-phospho-L-seryl-[protein] + H2O = L-seryl-[protein] + phosphate. It catalyses the reaction O-phospho-L-threonyl-[protein] + H2O = L-threonyl-[protein] + phosphate. In terms of biological role, plays an important role in preventing glycogen hyperphosphorylation and the formation of insoluble aggregates, via its activity as glycogen phosphatase, and by promoting the ubiquitination of proteins involved in glycogen metabolism via its interaction with the E3 ubiquitin ligase NHLRC1/malin. Dephosphorylates phosphotyrosine and synthetic substrates, such as para-nitrophenylphosphate (pNPP), and has low activity with phosphoserine and phosphothreonine substrates (in vitro). Has also been shown to dephosphorylate MAPT. Shows strong phosphatase activity towards complex carbohydrates in vitro, avoiding glycogen hyperphosphorylation which is associated with reduced branching and formation of insoluble aggregates. Forms a complex with NHLRC1/malin and HSP70, which suppresses the cellular toxicity of misfolded proteins by promoting their degradation through the ubiquitin-proteasome system (UPS). Acts as a scaffold protein to facilitate PPP1R3C/PTG ubiquitination by NHLRC1/malin. Also promotes proteasome-independent protein degradation through the macroautophagy pathway. The sequence is that of Laforin (EPM2A) from Canis lupus familiaris (Dog).